The chain runs to 557 residues: Dihydroxy-acid dehydratase (557 aa).

Aspartate 78 is a binding site for Mg(2+). Cysteine 119 lines the [2Fe-2S] cluster pocket. 2 residues coordinate Mg(2+): aspartate 120 and lysine 121. Lysine 121 carries the post-translational modification N6-carboxylysine. Position 192 (cysteine 192) interacts with [2Fe-2S] cluster. Glutamate 442 contacts Mg(2+). The Proton acceptor role is filled by serine 468.

It belongs to the IlvD/Edd family. In terms of assembly, homodimer. Requires [2Fe-2S] cluster as cofactor. Mg(2+) serves as cofactor.

It carries out the reaction (2R)-2,3-dihydroxy-3-methylbutanoate = 3-methyl-2-oxobutanoate + H2O. The catalysed reaction is (2R,3R)-2,3-dihydroxy-3-methylpentanoate = (S)-3-methyl-2-oxopentanoate + H2O. It functions in the pathway amino-acid biosynthesis; L-isoleucine biosynthesis; L-isoleucine from 2-oxobutanoate: step 3/4. It participates in amino-acid biosynthesis; L-valine biosynthesis; L-valine from pyruvate: step 3/4. Functions in the biosynthesis of branched-chain amino acids. Catalyzes the dehydration of (2R,3R)-2,3-dihydroxy-3-methylpentanoate (2,3-dihydroxy-3-methylvalerate) into 2-oxo-3-methylpentanoate (2-oxo-3-methylvalerate) and of (2R)-2,3-dihydroxy-3-methylbutanoate (2,3-dihydroxyisovalerate) into 2-oxo-3-methylbutanoate (2-oxoisovalerate), the penultimate precursor to L-isoleucine and L-valine, respectively. In Bacillus cytotoxicus (strain DSM 22905 / CIP 110041 / 391-98 / NVH 391-98), this protein is Dihydroxy-acid dehydratase.